Here is a 472-residue protein sequence, read N- to C-terminus: Pentatricopeptide repeat-containing protein At5g46100 (472 aa).

PPR repeat units follow at residues 50-84, 85-119, 120-154, 155-190, 191-225, 226-260, 261-295, 296-330, 331-365, 373-406, and 407-441; these read DQSSFGYMVLRLVSANKFKAAEDLIVRMKIENCVV, SEDILLSICRGYGRVHRPFDSLRVFHKMKDFDCDP, SQKAYVTVLAILVEENQLNLAFKFYKNMREIGLPP, TVASLNVLIKALCRNDGTVDAGLKIFLEMPKRGCDP, DSYTYGTLISGLCRFGRIDEAKKLFTEMVEKDCAP, TVVTYTSLINGLCGSKNVDEAMRYLEEMKSKGIEP, NVFTYSSLMDGLCKDGRSLQAMELFEMMMARGCRP, NMVTYTTLITGLCKEQKIQEAVELLDRMNLQGLKP, DAGLYGKVISGFCAISKFREAANFLDEMILGGITP, HVKTSNEVVRGLCANYPSRAFTLYLSMRSRGISV, and EVETLESLVKCLCKKGEFQKAVQLVDEIVTDGCIP.

The protein belongs to the PPR family. P subfamily.

The protein is Pentatricopeptide repeat-containing protein At5g46100 of Arabidopsis thaliana (Mouse-ear cress).